The following is a 483-amino-acid chain: Cytochrome P450 monooxygenase stcF (483 aa).

Residue Cys424 participates in heme binding.

Belongs to the cytochrome P450 family. Requires heme as cofactor.

It participates in mycotoxin biosynthesis; sterigmatocystin biosynthesis. Its function is as follows. Cytochrome P450 monooxygenase; part of the gene cluster that mediates the biosynthesis of sterigmatocystin (ST), a polyketide-derived furanocoumarin which is part of the most toxic and carcinogenic compounds among the known mycotoxins. The first step in the biosynthesis of sterigmatocystin is the production of hexanoate by the fatty acid synthase (FAS) units stcJ and stcK. The polyketide backbone is assembled by the non-reducing polyketide synthase stcA by condensation of the starter hexanoyl-CoA and 7 malonyl-CoA extender units followed by cyclization and release of norsolorinic acid. Norsolorinic acid is the first stable intermediate in the biosynthesis of sterigmatocystin and is converted into averantin (AVN) by the ketoreductase stcE which reduces the hexanoate ketone to an alcohol. Averantin is then oxidized into 5'-hydroxyaverantin (HAVN) by the cytochrome P450 monooxygenase stcF. 5'-hydroxyaverantin is further converted to 5'-oxyaverantin (OAVN) by the 5'-hydroxyaverantin dehydrogenase stcG. The next step is the conversion of OAVN into averufin (AVF) which is catalyzed by a yet to be identified enzyme. The cytochrome P450 monooxygenase stcB and the flavin-binding monooxygenase stcW are both required for the conversion of averufin to 1-hydroxyversicolorone. The esterase stcI probably catalyzes the formation of versiconal hemiacetal acetate from 1-hydroxyversicolorone. The oxydoreductase stcN then probably catalyzes the biosynthetic step from versiconal to versicolorin B (VERB). The next step is performed by the versicolorin B desaturase stcL to produce versicolorin A (VERA). The ketoreductase stcU and the cytochrome P450 monooxygenase stcS are involved in the conversion of versicolorin A to demethylsterigmatocystin. The Baeyer-Villiger oxidas stcQ and the reductase stcR might be involved in the biosynthetic step from versicolorin A to demethylsterigmatocystin. The final step in the biosynthesis of sterigmatocystin is the methylation of demethylsterigmatocystin catalyzed by the methyltransferase stcP. The polypeptide is Cytochrome P450 monooxygenase stcF (Emericella nidulans (strain FGSC A4 / ATCC 38163 / CBS 112.46 / NRRL 194 / M139) (Aspergillus nidulans)).